Consider the following 160-residue polypeptide: Phosphatidylinositol N-acetylglucosaminyltransferase subunit gpi15 (160 aa).

The next 2 helical transmembrane spans lie at 22 to 42 (GTQMFALCFISFVIGATSLAI) and 48 to 68 (IIITLVELSFLLSLFHIISGV).

This sequence belongs to the PIGH family.

Its subcellular location is the endoplasmic reticulum membrane. The enzyme catalyses a 1,2-diacyl-sn-glycero-3-phospho-(1D-myo-inositol) + UDP-N-acetyl-alpha-D-glucosamine = a 6-(N-acetyl-alpha-D-glucosaminyl)-1-(1,2-diacyl-sn-glycero-3-phospho)-1D-myo-inositol + UDP + H(+). It participates in glycolipid biosynthesis; glycosylphosphatidylinositol-anchor biosynthesis. In terms of biological role, part of the complex catalyzing the transfer of N-acetylglucosamine from UDP-N-acetylglucosamine to phosphatidylinositol, the first step of GPI biosynthesis. This is Phosphatidylinositol N-acetylglucosaminyltransferase subunit gpi15 (gpi15) from Schizosaccharomyces pombe (strain 972 / ATCC 24843) (Fission yeast).